Here is a 281-residue protein sequence, read N- to C-terminus: RNA polymerase sigma factor RpoH (281 aa).

The interval 52–121 (LILSHLRFVI…IHEYVLRNWR (70 aa)) is sigma-70 factor domain-2. The Interaction with polymerase core subunit RpoC signature appears at 76-79 (DLIQ). The segment at 226–277 (ALQSLDARSQDIIKARWLDDNKATLHDLAAKYNVSAERIRQLETNALKKLKS) is sigma-70 factor domain-4. Residues 250 to 269 (LHDLAAKYNVSAERIRQLET) constitute a DNA-binding region (H-T-H motif).

The protein belongs to the sigma-70 factor family. RpoH subfamily. As to quaternary structure, interacts with the RNA polymerase core enzyme.

The protein resides in the cytoplasm. Sigma factors are initiation factors that promote the attachment of RNA polymerase to specific initiation sites and are then released. This sigma factor is involved in regulation of expression of heat shock genes. The chain is RNA polymerase sigma factor RpoH from Haemophilus influenzae (strain ATCC 51907 / DSM 11121 / KW20 / Rd).